Consider the following 294-residue polypeptide: Elongation factor Ts (294 aa).

The tract at residues 79-82 (TDFV) is involved in Mg(2+) ion dislocation from EF-Tu.

This sequence belongs to the EF-Ts family.

Its subcellular location is the cytoplasm. Its function is as follows. Associates with the EF-Tu.GDP complex and induces the exchange of GDP to GTP. It remains bound to the aminoacyl-tRNA.EF-Tu.GTP complex up to the GTP hydrolysis stage on the ribosome. In Geobacillus kaustophilus (strain HTA426), this protein is Elongation factor Ts (tsf).